The chain runs to 175 residues: Large ribosomal subunit protein bL17m (175 aa).

Residues 1 to 8 constitute a mitochondrion transit peptide; that stretch reads MRLSVAAA. A disordered region spans residues 155–175; the sequence is DLRQSQEASNHSSHTAQTPGI. Residues 161–175 show a composition bias toward polar residues; that stretch reads EASNHSSHTAQTPGI.

This sequence belongs to the bacterial ribosomal protein bL17 family. As to quaternary structure, component of the mitochondrial large ribosomal subunit (mt-LSU). Mature mammalian 55S mitochondrial ribosomes consist of a small (28S) and a large (39S) subunit. The 28S small subunit contains a 12S ribosomal RNA (12S mt-rRNA) and 30 different proteins. The 39S large subunit contains a 16S rRNA (16S mt-rRNA), a copy of mitochondrial valine transfer RNA (mt-tRNA(Val)), which plays an integral structural role, and 52 different proteins. Detected in adrenal gland, mammary gland and adipose tissue.

The protein resides in the mitochondrion. This chain is Large ribosomal subunit protein bL17m (MRPL17), found in Homo sapiens (Human).